Consider the following 143-residue polypeptide: 3-hydroxyacyl-[acyl-carrier-protein] dehydratase FabZ (143 aa).

Residue His48 is part of the active site.

The protein belongs to the thioester dehydratase family. FabZ subfamily.

It is found in the cytoplasm. It carries out the reaction a (3R)-hydroxyacyl-[ACP] = a (2E)-enoyl-[ACP] + H2O. Functionally, involved in unsaturated fatty acids biosynthesis. Catalyzes the dehydration of short chain beta-hydroxyacyl-ACPs and long chain saturated and unsaturated beta-hydroxyacyl-ACPs. In Roseiflexus sp. (strain RS-1), this protein is 3-hydroxyacyl-[acyl-carrier-protein] dehydratase FabZ.